The sequence spans 698 residues: Elongation factor G (698 aa).

A tr-type G domain is found at 8–290 (ERYRNIGISA…AVIELLPSPT (283 aa)). GTP contacts are provided by residues 17-24 (AHIDAGKT), 88-92 (DTPGH), and 142-145 (NKMD).

The protein belongs to the TRAFAC class translation factor GTPase superfamily. Classic translation factor GTPase family. EF-G/EF-2 subfamily.

The protein resides in the cytoplasm. In terms of biological role, catalyzes the GTP-dependent ribosomal translocation step during translation elongation. During this step, the ribosome changes from the pre-translocational (PRE) to the post-translocational (POST) state as the newly formed A-site-bound peptidyl-tRNA and P-site-bound deacylated tRNA move to the P and E sites, respectively. Catalyzes the coordinated movement of the two tRNA molecules, the mRNA and conformational changes in the ribosome. This is Elongation factor G from Chromobacterium violaceum (strain ATCC 12472 / DSM 30191 / JCM 1249 / CCUG 213 / NBRC 12614 / NCIMB 9131 / NCTC 9757 / MK).